The following is a 343-amino-acid chain: Probable xyloglucan endotransglucosylase/hydrolase protein 30 (343 aa).

The signal sequence occupies residues 1-23 (MSKSSYNHIFILILCLCLRSSSA). The GH16 domain maps to 24–224 (FTNLNTLSFE…YKFAPFVAEF (201 aa)). The active-site Nucleophile is glutamate 109. The Proton donor role is filled by glutamate 113. Xyloglucan contacts are provided by residues glutamate 113 and 126 to 128 (QTN). Asparagine 132 carries an N-linked (GlcNAc...) asparagine glycan. Xyloglucan contacts are provided by residues 136-140 (HRGRE), 203-204 (DW), glycine 208, and arginine 285. A disulfide bridge links cysteine 280 with cysteine 293. The interval 306 to 343 (TGRLKFGGTEARERRRNRRQQRRPEIEIESDPDDRKLL) is disordered.

This sequence belongs to the glycosyl hydrolase 16 family. XTH group 3 subfamily. In terms of processing, contains at least one intrachain disulfide bond essential for its enzymatic activity. Predominantly expressed in green siliques.

The protein resides in the secreted. It is found in the cell wall. The protein localises to the extracellular space. It localises to the apoplast. The catalysed reaction is breaks a beta-(1-&gt;4) bond in the backbone of a xyloglucan and transfers the xyloglucanyl segment on to O-4 of the non-reducing terminal glucose residue of an acceptor, which can be a xyloglucan or an oligosaccharide of xyloglucan.. Catalyzes xyloglucan endohydrolysis (XEH) and/or endotransglycosylation (XET). Cleaves and religates xyloglucan polymers, an essential constituent of the primary cell wall, and thereby participates in cell wall construction of growing tissues. In Arabidopsis thaliana (Mouse-ear cress), this protein is Probable xyloglucan endotransglucosylase/hydrolase protein 30 (XTH30).